A 260-amino-acid chain; its full sequence is Indole-3-glycerol phosphate synthase (260 aa).

This sequence belongs to the TrpC family.

The enzyme catalyses 1-(2-carboxyphenylamino)-1-deoxy-D-ribulose 5-phosphate + H(+) = (1S,2R)-1-C-(indol-3-yl)glycerol 3-phosphate + CO2 + H2O. It participates in amino-acid biosynthesis; L-tryptophan biosynthesis; L-tryptophan from chorismate: step 4/5. In Thermoanaerobacter sp. (strain X514), this protein is Indole-3-glycerol phosphate synthase.